A 284-amino-acid chain; its full sequence is Small ribosomal subunit protein uS5 (284 aa).

The span at 1–10 (MMADEKKTPE) shows a compositional bias: basic and acidic residues. The disordered stretch occupies residues 1 to 105 (MMADEKKTPE…DNRRGGRREE (105 aa)). The segment covering 14-23 (ETATPAVAVE) has biased composition (low complexity). The span at 24–43 (DALKAEPTETLEAQKAKAEA) shows a compositional bias: basic and acidic residues. Low complexity predominate over residues 44–67 (ETPAVAETPSEAAANQSAAQGAEG). Positions 68–105 (QPRERGGHDRGGRGGRGGNDRGRGRGGRDNRRGGRREE) are enriched in basic and acidic residues. The region spanning 110–173 (IIEKLVHINR…AAARKKMIRV (64 aa)) is the S5 DRBM domain. The segment at 246-284 (DQTSPKSVAQRRGKKVADLLGRGGASEAEAEADAAAIAE) is disordered.

The protein belongs to the universal ribosomal protein uS5 family. Part of the 30S ribosomal subunit. Contacts proteins S4 and S8.

Functionally, with S4 and S12 plays an important role in translational accuracy. Its function is as follows. Located at the back of the 30S subunit body where it stabilizes the conformation of the head with respect to the body. This is Small ribosomal subunit protein uS5 from Erythrobacter litoralis (strain HTCC2594).